The chain runs to 435 residues: MWAPPAAIMGDGPAKKVGNQAPLQTQALQTASLRDGPAKRAVWVRRRSSEPQEPTESKAAKERPKQEVTKAVVVDLGTGYCKCGFAGLPRPTHKISTMVGKPYMETAKTGDNRKETFVGQELNNTNVHLKLVNPLRHGIIVDWDTVQDIWEYLFRQEMKIAPEEHAVLVSDPPLSPHTNREKYAEMLFEAFNTPAMHIAYQSRLSMYSYGRTSGLVVEVGHGVSYVVPIYEGYPLPSITGRLDYAGSDLTAYLLGLLNSAGNEFTQDQMGIVEDIKKKCCFVALDPTEEKRVPLSEHTIRYVLPDGKEIQLCQERFLCSEMFFKPSLIKSMQLGLHTQTVSCLNKCDIALKRDLMGNILLCGGSTMLSGFPNRLQKELSSMCPNDTPQVNVLPERDSAVWTGGSILASLQGFQPLWVHRFEYEEHGPFFLYRRCF.

2 disordered regions span residues 1 to 20 (MWAPPAAIMGDGPAKKVGNQ) and 29 to 65 (QTASLRDGPAKRAVWVRRRSSEPQEPTESKAAKERPK). A required for interaction with TES region spans residues 31 to 51 (ASLRDGPAKRAVWVRRRSSEP). The segment covering 47-65 (RSSEPQEPTESKAAKERPK) has biased composition (basic and acidic residues).

It belongs to the actin family. As to quaternary structure, interacts (via N-terminus) with TES (via LIM domain 2). Heterodimer with TES; the heterodimer interacts with ENAH to form a heterotrimer. Interacts with ACTL9. Interacts with CYLC1; the interaction may be relevant for proper acrosome attachment to the nuclear envelope.

It is found in the cytoplasm. The protein localises to the cytoskeleton. The protein resides in the golgi apparatus. It localises to the nucleus. Functionally, essential for normal spermatogenesis and male fertility. Required for normal sperm head morphology, acroplaxome formation, acrosome attachment, and acrosome granule stability. May anchor and stabilize acrosomal adherence to the acroplaxome at least in part by facilitating the presence of F-actin in the subacrosomal space. May play an important role in formation and fusion of Golgi-derived vesicles during acrosome biogenesis. This Macaca fascicularis (Crab-eating macaque) protein is Actin-like protein 7A (ACTL7A).